Reading from the N-terminus, the 215-residue chain is Pyrrolidone-carboxylate peptidase (215 aa).

Residues Glu-80, Cys-143, and His-167 contribute to the active site.

This sequence belongs to the peptidase C15 family. In terms of assembly, homotetramer.

Its subcellular location is the cytoplasm. The enzyme catalyses Release of an N-terminal pyroglutamyl group from a polypeptide, the second amino acid generally not being Pro.. Its function is as follows. Removes 5-oxoproline from various penultimate amino acid residues except L-proline. This chain is Pyrrolidone-carboxylate peptidase, found in Bacillus thuringiensis (strain Al Hakam).